The primary structure comprises 146 residues: Putative pre-16S rRNA nuclease (146 aa).

This sequence belongs to the YqgF nuclease family.

It localises to the cytoplasm. In terms of biological role, could be a nuclease involved in processing of the 5'-end of pre-16S rRNA. In Pediococcus pentosaceus (strain ATCC 25745 / CCUG 21536 / LMG 10740 / 183-1w), this protein is Putative pre-16S rRNA nuclease.